Reading from the N-terminus, the 1440-residue chain is Pentatricopeptide repeat-containing protein At3g18110, chloroplastic (1440 aa).

The transit peptide at 1 to 44 (MAVSAGALAFPALSVRATLNPEIKDEQANISSTTSSSQKFTYSR) directs the protein to the chloroplast. Over residues 63 to 72 (TPSQTLSSPV) the composition is skewed to polar residues. The disordered stretch occupies residues 63 to 84 (TPSQTLSSPVSPIAGTPDSGDV). PPR repeat units follow at residues 224-258 (RVQV…GCVP), 259-295 (DLIS…GLRP), 296-330 (DAIT…RCQP), 331-365 (DLWT…GFFP), 366-400 (DAVT…GFGK), 401-431 (DEMT…MKGL), 437-471 (DAIT…GIKP), 472-506 (TLQT…GTKP), 507-541 (DNLA…GHTP), 542-572 (SYTL…MEEL), 608-638 (ENDT…LKEH), 643-678 (KRLI…GWCF), 680-714 (SSTM…GCEA), 715-749 (SESV…GFHF), 751-785 (CSPM…GRTP), 786-820 (DLKT…GPSP), 821-855 (TVES…GFKI), 856-890 (SKSS…GYLP), 891-925 (TIRL…NFKV), 926-960 (ELAI…GLEP), 961-995 (DETT…GLDP), 996-1030 (KLDT…GLKL), 1031-1065 (DRSF…GIEP), 1066-1100 (TLAT…EVEL), and 1101-1135 (TTLP…GLEP). Positions 1419–1440 (KKKKMGNETNGINTRRKFVRSK) are disordered.

Belongs to the PPR family. P subfamily.

It is found in the plastid. Its subcellular location is the chloroplast. Functionally, may play a role in embryogenesis. The protein is Pentatricopeptide repeat-containing protein At3g18110, chloroplastic (EMB1270) of Arabidopsis thaliana (Mouse-ear cress).